Reading from the N-terminus, the 303-residue chain is UDP-N-acetylenolpyruvoylglucosamine reductase (303 aa).

The 168-residue stretch at 29–196 (KIGGPADVLV…LEAVLQLEQK (168 aa)) folds into the FAD-binding PCMH-type domain. The active site involves Arg174. Ser225 serves as the catalytic Proton donor. The active site involves Glu295.

It belongs to the MurB family. It depends on FAD as a cofactor.

It localises to the cytoplasm. The enzyme catalyses UDP-N-acetyl-alpha-D-muramate + NADP(+) = UDP-N-acetyl-3-O-(1-carboxyvinyl)-alpha-D-glucosamine + NADPH + H(+). Its pathway is cell wall biogenesis; peptidoglycan biosynthesis. Its function is as follows. Cell wall formation. The polypeptide is UDP-N-acetylenolpyruvoylglucosamine reductase (Bacillus licheniformis (strain ATCC 14580 / DSM 13 / JCM 2505 / CCUG 7422 / NBRC 12200 / NCIMB 9375 / NCTC 10341 / NRRL NRS-1264 / Gibson 46)).